The primary structure comprises 145 residues: 3-hydroxyacyl-[acyl-carrier-protein] dehydratase FabZ (145 aa).

The active site involves H47.

The protein belongs to the thioester dehydratase family. FabZ subfamily.

It localises to the cytoplasm. The catalysed reaction is a (3R)-hydroxyacyl-[ACP] = a (2E)-enoyl-[ACP] + H2O. Involved in unsaturated fatty acids biosynthesis. Catalyzes the dehydration of short chain beta-hydroxyacyl-ACPs and long chain saturated and unsaturated beta-hydroxyacyl-ACPs. This chain is 3-hydroxyacyl-[acyl-carrier-protein] dehydratase FabZ, found in Aromatoleum aromaticum (strain DSM 19018 / LMG 30748 / EbN1) (Azoarcus sp. (strain EbN1)).